The following is a 333-amino-acid chain: Acetyl-coenzyme A carboxylase carboxyl transferase subunit alpha (333 aa).

Residues 48–308 form the CoA carboxyltransferase C-terminal domain; it reads ALEVKVETLR…KEMLIEELRI (261 aa).

Belongs to the AccA family. Acetyl-CoA carboxylase is a heterohexamer composed of biotin carboxyl carrier protein (AccB), biotin carboxylase (AccC) and two subunits each of ACCase subunit alpha (AccA) and ACCase subunit beta (AccD).

It localises to the cytoplasm. It catalyses the reaction N(6)-carboxybiotinyl-L-lysyl-[protein] + acetyl-CoA = N(6)-biotinyl-L-lysyl-[protein] + malonyl-CoA. It participates in lipid metabolism; malonyl-CoA biosynthesis; malonyl-CoA from acetyl-CoA: step 1/1. In terms of biological role, component of the acetyl coenzyme A carboxylase (ACC) complex. First, biotin carboxylase catalyzes the carboxylation of biotin on its carrier protein (BCCP) and then the CO(2) group is transferred by the carboxyltransferase to acetyl-CoA to form malonyl-CoA. This chain is Acetyl-coenzyme A carboxylase carboxyl transferase subunit alpha, found in Chlorobium phaeobacteroides (strain DSM 266 / SMG 266 / 2430).